Here is a 475-residue protein sequence, read N- to C-terminus: NADH-quinone oxidoreductase subunit N (475 aa).

Transmembrane regions (helical) follow at residues 5–25, 32–52, 71–91, 99–119, 121–141, 155–175, 193–213, 232–252, 266–286, 294–314, 322–342, 366–386, 389–409, and 439–459; these read LALPEIVLALCGLAILVFGVV, FLSCSMLTIGAFVLTGFLVVM, FMKILSLAGGAFATMLTVGYA, FEFPVLLLFSTLGAMMMASSE, LMTLFIGLELSSLAIYILCAF, YFVLGSLASGLLLYGSSLVYG, STAVPMGLMFGIVFMLAGLTF, PTSVTAYMAGAPKFAAFALLL, WQILVEGVSMLSMLFGSLAAI, LMAYSSIGHMGYALMGLCAGT, LVYLTTYLLMNVGAFAVIIAM, ATAMAIFMFSMAGAPPLAGFF, MMVFYAAINAHLFGLAAIGVV, and LSLSFVSVGMGIATTGFLLVL.

It belongs to the complex I subunit 2 family. As to quaternary structure, NDH-1 is composed of 14 different subunits. Subunits NuoA, H, J, K, L, M, N constitute the membrane sector of the complex.

The protein resides in the cell inner membrane. The enzyme catalyses a quinone + NADH + 5 H(+)(in) = a quinol + NAD(+) + 4 H(+)(out). Its function is as follows. NDH-1 shuttles electrons from NADH, via FMN and iron-sulfur (Fe-S) centers, to quinones in the respiratory chain. The immediate electron acceptor for the enzyme in this species is believed to be ubiquinone. Couples the redox reaction to proton translocation (for every two electrons transferred, four hydrogen ions are translocated across the cytoplasmic membrane), and thus conserves the redox energy in a proton gradient. The protein is NADH-quinone oxidoreductase subunit N of Gluconacetobacter diazotrophicus (strain ATCC 49037 / DSM 5601 / CCUG 37298 / CIP 103539 / LMG 7603 / PAl5).